The sequence spans 139 residues: MNRDIGKSAERELVSILRSEGFNAVRIPTSNSSPNPLPDIFATKGNILLAIECKSTWEHKVKVKDRQVIKLFEFLSMFTMEGRALIAVKFKEIHKWKVMEIREIKEVEVTVDNSIFLENYISQFLENYIPQAGRELSKL.

Mg(2+)-binding residues include Glu10, Asp39, and Glu52.

The protein belongs to the Holliday junction resolvase Hjc family. Hje subfamily. In terms of assembly, homodimer. The cofactor is Mg(2+).

It catalyses the reaction Endonucleolytic cleavage at a junction such as a reciprocal single-stranded crossover between two homologous DNA duplexes (Holliday junction).. In terms of biological role, a structure-specific endonuclease that resolves Holliday junction (HJ) intermediates during genetic recombination. Acts only on 4-way DNA junctions in a sequence non-specific manner; introduces paired nicks in opposing strands 2 bases 3' of the point of strand exchange only on continuous strands of 4-way junction DNA. Cleaves both mobile and immobile junctions. Functionally, redundant function with Holliday junction resolvase Hjc. This Sulfolobus acidocaldarius (strain ATCC 33909 / DSM 639 / JCM 8929 / NBRC 15157 / NCIMB 11770) protein is Crossover junction endodeoxyribonuclease Hje.